A 275-amino-acid chain; its full sequence is Transcription factor Ovo-like 2 (275 aa).

The tract at residues 15 to 101 is disordered; sequence SVRSWDELPD…GHLATKQRPV (87 aa). Basic and acidic residues-rich tracts occupy residues 18-29 and 39-49; these read SWDELPDEKRAD and LLHDPPEDCRS. Residues 56-76 are compositionally biased toward low complexity; sequence GSGSSSAGEPGGAESSSSPHA. The span at 80 to 89 shows a compositional bias: acidic residues; that stretch reads ETPEPGDAEG. C2H2-type zinc fingers lie at residues 119–141, 147–169, 175–198, and 214–237; these read HSCD…LKCH, HLCT…VRTH, YKCN…KKIH, and YVCE…NSAH. Phosphoserine is present on Ser-269.

The protein belongs to the krueppel C2H2-type zinc-finger protein family. In terms of assembly, interacts (via zinc-finger domains) with CEBPA (via bZIP domain); the interaction inhibits the transcription factor activity of CEBPA and is required to repress adipogenesis. Expressed in testis, ovary, heart and skeletal muscle. Expressed in the cornea, but absent from the corneal endothelium.

The protein localises to the nucleus. Functionally, zinc-finger transcription repressor factor. Plays a critical role in maintaining the identity of epithelial lineages by suppressing epithelial-to mesenchymal transition (EMT) mainly through the repression of ZEB1, an EMT inducer. Positively regulates neuronal differentiation. Suppresses cell cycling and terminal differentiation of keratinocytes by directly repressing MYC and NOTCH1. Important for the correct development of primordial germ cells in embryos. Plays dual functions in thermogenesis and adipogenesis to maintain energy balance. Essential for brown/beige adipose tissue-mediated thermogenesis, is necessary for the development of brown adipocytes. In white adipose tissues, limits adipogenesis by blocking CEBPA binding to its transcriptional targets and inhibiting its transcription factor activity. This is Transcription factor Ovo-like 2 from Homo sapiens (Human).